The sequence spans 137 residues: Nucleoside diphosphate kinase (137 aa).

Positions 9, 57, 85, 91, 102, and 112 each coordinate ATP. The Pros-phosphohistidine intermediate role is filled by histidine 115.

This sequence belongs to the NDK family. Homotetramer. Requires Mg(2+) as cofactor.

The protein localises to the cytoplasm. The catalysed reaction is a 2'-deoxyribonucleoside 5'-diphosphate + ATP = a 2'-deoxyribonucleoside 5'-triphosphate + ADP. The enzyme catalyses a ribonucleoside 5'-diphosphate + ATP = a ribonucleoside 5'-triphosphate + ADP. Functionally, major role in the synthesis of nucleoside triphosphates other than ATP. The ATP gamma phosphate is transferred to the NDP beta phosphate via a ping-pong mechanism, using a phosphorylated active-site intermediate. The protein is Nucleoside diphosphate kinase of Wolinella succinogenes (strain ATCC 29543 / DSM 1740 / CCUG 13145 / JCM 31913 / LMG 7466 / NCTC 11488 / FDC 602W) (Vibrio succinogenes).